We begin with the raw amino-acid sequence, 20 residues long: Flagellar filament 33 kDa core protein (20 aa).

The protein belongs to the bacterial flagellin family. As to quaternary structure, the flagellum consists of an outer layer composed of repeating units of FlaA around a core that contains one or all of five antigenically related polypeptides.

The protein localises to the periplasmic flagellum. The protein resides in the periplasm. Component of the core of the flagella. In Spirochaeta aurantia, this protein is Flagellar filament 33 kDa core protein.